Reading from the N-terminus, the 508-residue chain is Photosystem II CP47 reaction center protein (508 aa).

The next 6 membrane-spanning stretches (helical) occupy residues alanine 21–serine 36, isoleucine 101–tryptophan 115, glycine 140–phenylalanine 156, isoleucine 203–serine 218, valine 237–valine 252, and threonine 457–arginine 472.

This sequence belongs to the PsbB/PsbC family. PsbB subfamily. In terms of assembly, PSII is composed of 1 copy each of membrane proteins PsbA, PsbB, PsbC, PsbD, PsbE, PsbF, PsbH, PsbI, PsbJ, PsbK, PsbL, PsbM, PsbT, PsbX, PsbY, PsbZ, Psb30/Ycf12, at least 3 peripheral proteins of the oxygen-evolving complex and a large number of cofactors. It forms dimeric complexes. Requires Binds multiple chlorophylls. PSII binds additional chlorophylls, carotenoids and specific lipids. as cofactor.

The protein localises to the plastid. It localises to the chloroplast thylakoid membrane. Its function is as follows. One of the components of the core complex of photosystem II (PSII). It binds chlorophyll and helps catalyze the primary light-induced photochemical processes of PSII. PSII is a light-driven water:plastoquinone oxidoreductase, using light energy to abstract electrons from H(2)O, generating O(2) and a proton gradient subsequently used for ATP formation. This is Photosystem II CP47 reaction center protein from Psilotum nudum (Whisk fern).